A 502-amino-acid polypeptide reads, in one-letter code: Cytochrome P450 2J3 (502 aa).

Cys-448 provides a ligand contact to heme.

It belongs to the cytochrome P450 family. Heme serves as cofactor. Abundantly expressed in heart and liver.

The protein localises to the endoplasmic reticulum membrane. The protein resides in the microsome membrane. It carries out the reaction an organic molecule + reduced [NADPH--hemoprotein reductase] + O2 = an alcohol + oxidized [NADPH--hemoprotein reductase] + H2O + H(+). Its function is as follows. This enzyme metabolizes arachidonic acid predominantly via a NADPH-dependent olefin epoxidation mainly to 14,15-, 11,12-, and 8,9-epoxyeicosatrienoic acids (EET). It also acts as an omega-1-hydroxylase by metabolizing arachidonic acid to 19-hydroxyeicosatetraenoic acid (19-OH-AA). This is Cytochrome P450 2J3 (Cyp2j3) from Rattus norvegicus (Rat).